The sequence spans 419 residues: MKVYLVGGAIRNKFLNLPVQDRDWVVVGATPEILLSLKFKQVGKGFPVFLHPYSKEEYSLARVDRKIGVGHTGFSFDYSNKVTLKEDLMRRDLTINAIAQDNNGNYIDPFKGIRDIKNRILRHVSPAFSEDPLRVLRIARFCALFHHLGFRIATETMKIMSIVVKNNELLNLTRDRVWKETEKAFNTDNPHVYFQVLKNCNALSVIFPEINLVYQRQYYCIDNMYHNFYDTFDIFMGLAELSKISRDIDIRFSYLFFCINRMLFIDTSSYILVINQKELVRYFKALCQRFCIPAYIKNVSICFSRFYKFLSVIHYQSSKDIIMFFYIIDAWRKPYMIRKLSVLNNFCVSRNAYFKNITCQQYPRNFLKYAFNVANKISIKPILKMGFSGLQIKYELIRLRINAIENWRQNITVYKKCCF.

Residues glycine 8 and arginine 11 each contribute to the ATP site. Glycine 8 and arginine 11 together coordinate CTP. Mg(2+) contacts are provided by aspartate 21 and aspartate 23. ATP is bound by residues arginine 91, arginine 137, and arginine 140. Residues arginine 91, arginine 137, and arginine 140 each coordinate CTP.

It belongs to the tRNA nucleotidyltransferase/poly(A) polymerase family. Bacterial CCA-adding enzyme type 2 subfamily. Mg(2+) is required as a cofactor.

It catalyses the reaction a tRNA precursor + 2 CTP + ATP = a tRNA with a 3' CCA end + 3 diphosphate. It carries out the reaction a tRNA with a 3' CCA end + 2 CTP + ATP = a tRNA with a 3' CCACCA end + 3 diphosphate. Catalyzes the addition and repair of the essential 3'-terminal CCA sequence in tRNAs without using a nucleic acid template. Adds these three nucleotides in the order of C, C, and A to the tRNA nucleotide-73, using CTP and ATP as substrates and producing inorganic pyrophosphate. tRNA 3'-terminal CCA addition is required both for tRNA processing and repair. Also involved in tRNA surveillance by mediating tandem CCA addition to generate a CCACCA at the 3' terminus of unstable tRNAs. While stable tRNAs receive only 3'-terminal CCA, unstable tRNAs are marked with CCACCA and rapidly degraded. In Buchnera aphidicola subsp. Baizongia pistaciae (strain Bp), this protein is CCA-adding enzyme.